The primary structure comprises 914 residues: Thyroid peroxidase (914 aa).

Residues 1–31 form the signal peptide; the sequence is MRTLGAMAIMLVVMGTVIFLSFILRSRDILC. The Extracellular portion of the chain corresponds to 32-834; that stretch reads GKTMKSHVIS…TCIDSGRLPR (803 aa). Residue asparagine 123 is glycosylated (N-linked (GlcNAc...) asparagine). Cysteine 136 and cysteine 152 are joined by a disulfide. Aspartate 232 provides a ligand contact to heme b. Histidine 233 functions as the Proton acceptor in the catalytic mechanism. Aspartate 234 serves as a coordination point for Ca(2+). Intrachain disulfides connect cysteine 253-cysteine 263 and cysteine 257-cysteine 278. Residues asparagine 271 and asparagine 299 are each glycosylated (N-linked (GlcNAc...) asparagine). Positions 313, 315, 317, and 319 each coordinate Ca(2+). The N-linked (GlcNAc...) asparagine glycan is linked to asparagine 334. Heme b contacts are provided by glutamate 387 and histidine 482. Intrachain disulfides connect cysteine 586-cysteine 643, cysteine 684-cysteine 709, cysteine 730-cysteine 770, cysteine 756-cysteine 782, cysteine 788-cysteine 802, cysteine 796-cysteine 811, and cysteine 813-cysteine 826. N-linked (GlcNAc...) asparagine glycosylation is present at asparagine 603. One can recognise a Sushi domain in the interval 728–783; the sequence is DKCVFPEEVDNGNFVHCEESGKLVLVYSCFHGYKLQGQEQVTCTQKGWDSEPPVCK. In terms of domain architecture, EGF-like; calcium-binding spans 784–827; the sequence is DVNECADLTHPPCHPSAQCKNTKGSFQCVCTDPYVLGEDEKTCI. Residues 835 to 859 form a helical membrane-spanning segment; sequence ASWVSIALGALLIGGLASLTWIVIC. The Cytoplasmic segment spans residues 860-914; it reads RWTHADKKATLPITERVTTQSGCRKSQGRGISPHKAAAQDTGQEPASGSRVLLCE. The disordered stretch occupies residues 881–909; it reads GCRKSQGRGISPHKAAAQDTGQEPASGSR.

It belongs to the peroxidase family. XPO subfamily. As to quaternary structure, interacts with DUOX1, DUOX2 and CYBA. Ca(2+) serves as cofactor. It depends on heme b as a cofactor. Heme is covalently bound through a H(2)O(2)-dependent autocatalytic process. Heme insertion is important for the delivery of protein at the cell surface. In terms of processing, cleaved in its N-terminal part.

The protein localises to the membrane. The catalysed reaction is 2 iodide + H2O2 + 2 H(+) = diiodine + 2 H2O. It carries out the reaction [thyroglobulin]-L-tyrosine + iodide + H2O2 + H(+) = [thyroglobulin]-3-iodo-L-tyrosine + 2 H2O. It catalyses the reaction [thyroglobulin]-3-iodo-L-tyrosine + iodide + H2O2 + H(+) = [thyroglobulin]-3,5-diiodo-L-tyrosine + 2 H2O. The enzyme catalyses 2 [thyroglobulin]-3,5-diiodo-L-tyrosine + H2O2 = [thyroglobulin]-L-thyroxine + [thyroglobulin]-dehydroalanine + 2 H2O. The catalysed reaction is [thyroglobulin]-3-iodo-L-tyrosine + [thyroglobulin]-3,5-diiodo-L-tyrosine + H2O2 = [thyroglobulin]-3,3',5-triiodo-L-thyronine + [thyroglobulin]-dehydroalanine + 2 H2O. It functions in the pathway hormone biosynthesis; thyroid hormone biosynthesis. Its function is as follows. Iodination and coupling of the hormonogenic tyrosines in thyroglobulin to yield the thyroid hormones T(3) and T(4). The polypeptide is Thyroid peroxidase (Tpo) (Mus musculus (Mouse)).